Reading from the N-terminus, the 315-residue chain is MLRSSLLPFSYLYEKIINFRNTLYDKGFLKIKKLPVPVISVGNLSVGGSGKTSFVMYLADLLKDKRVCILSRGYKRKSKGTLIVSEYGNLKVSWEEAGDEPYLMAKLLPHVSVVASEDRYKGGLLALEKLSPEVFILDDGFQHRKLHRDLNILLLKKKDLKDRLLPAGNLREPLKEIRRADALVLTYQEVEPFEFFTGKPTFKMFREFCCLLNSDFEEVPFDILKEREVIAFSGLGDNGQFRKVLKNLGIKVKEFMSFPDHYDYSDFTPEEGEIYLTTPKDLIKLQGYENVFALNFKVKLEREEKLKKLIYRIFY.

Position 45–52 (45–52) interacts with ATP; sequence SVGGSGKT.

This sequence belongs to the LpxK family.

The enzyme catalyses a lipid A disaccharide + ATP = a lipid IVA + ADP + H(+). Its pathway is glycolipid biosynthesis; lipid IV(A) biosynthesis; lipid IV(A) from (3R)-3-hydroxytetradecanoyl-[acyl-carrier-protein] and UDP-N-acetyl-alpha-D-glucosamine: step 6/6. In terms of biological role, transfers the gamma-phosphate of ATP to the 4'-position of a tetraacyldisaccharide 1-phosphate intermediate (termed DS-1-P) to form tetraacyldisaccharide 1,4'-bis-phosphate (lipid IVA). In Aquifex aeolicus (strain VF5), this protein is Tetraacyldisaccharide 4'-kinase.